We begin with the raw amino-acid sequence, 386 residues long: Protein-glutamate methylesterase/protein-glutamine glutaminase (386 aa).

The Response regulatory domain maps to lysine 4–threonine 121. Aspartate 55 bears the 4-aspartylphosphate mark. A disordered region spans residues proline 133 to leucine 161. The region spanning isoleucine 190–serine 384 is the CheB-type methylesterase domain. Catalysis depends on residues serine 202, histidine 229, and aspartate 326.

The protein belongs to the CheB family. In terms of processing, phosphorylated by CheA. Phosphorylation of the N-terminal regulatory domain activates the methylesterase activity.

The protein localises to the cytoplasm. It catalyses the reaction [protein]-L-glutamate 5-O-methyl ester + H2O = L-glutamyl-[protein] + methanol + H(+). The catalysed reaction is L-glutaminyl-[protein] + H2O = L-glutamyl-[protein] + NH4(+). Involved in chemotaxis. Part of a chemotaxis signal transduction system that modulates chemotaxis in response to various stimuli. Catalyzes the demethylation of specific methylglutamate residues introduced into the chemoreceptors (methyl-accepting chemotaxis proteins or MCP) by CheR. Also mediates the irreversible deamidation of specific glutamine residues to glutamic acid. The polypeptide is Protein-glutamate methylesterase/protein-glutamine glutaminase (Idiomarina loihiensis (strain ATCC BAA-735 / DSM 15497 / L2-TR)).